Here is a 449-residue protein sequence, read N- to C-terminus: MSPESKKLFNIIILGVAFMFMFTAFQTCGNVAQTVIRSLNRTDFHGSGYTSMAIIYGVFSASNLITPSVVAIVGPQLSMFASGLFYSMYIAVFIQPFPWSFYTASVFIGIAAAVLWTAQGNCLTINSDEHSIGRNSGIFWALLQSSLFFGNLYIYFAWQGKTQISESDRRTVFIALTVISLVGTVLFFLIRKPDSENVLGEDESSDDQDMEVNESAQNNLTKAVDAFKKSFKLCVTKEMLLLSITTAYTGLELTFFSGVYGTCIGATNKFGAEEKSLIGLSGIFIGIGEILGGSLFGLLSKNNRFGRNPVVLLGILVHFIAFYLIFLNMPGDAPIAPVKGTDSSAYIKSSKEVAILCSFLLGLGDSCFNTQLLSILGFLYSEDSAPAFAIFKFVQSICAAVAFFYSNYLLLHWQLLVMVIFGFFGTISFFTVEWEAAAFVARGSDYRSI.

A helical membrane pass occupies residues 8–28 (LFNIIILGVAFMFMFTAFQTC). N40 carries an N-linked (GlcNAc...) asparagine glycan. The next 5 helical transmembrane spans lie at 53–73 (AIIY…VAIV), 74–94 (GPQL…AVFI), 96–116 (PFPW…AVLW), 138–158 (IFWA…YFAW), and 170–190 (RTVF…FFLI). A Phosphoserine modification is found at S204. The next 6 helical transmembrane spans lie at 239-259 (MLLL…FSGV), 277-297 (LIGL…SLFG), 309-329 (PVVL…FLNM), 359-379 (FLLG…LGFL), 385-405 (APAF…AFFY), and 410-430 (LLHW…ISFF).

This sequence belongs to the unc-93 family.

The protein resides in the membrane. This is UNC93-like protein MFSD11 (MFSD11) from Homo sapiens (Human).